A 151-amino-acid chain; its full sequence is Ribonuclease H (151 aa).

In terms of domain architecture, RNase H type-1 spans 1-141 (MKNVIIYTDG…ADALANRGID (141 aa)). Mg(2+) contacts are provided by Asp9, Glu47, Asp69, and Asp133.

This sequence belongs to the RNase H family. In terms of assembly, monomer. The cofactor is Mg(2+).

The protein localises to the cytoplasm. It carries out the reaction Endonucleolytic cleavage to 5'-phosphomonoester.. In terms of biological role, endonuclease that specifically degrades the RNA of RNA-DNA hybrids. The sequence is that of Ribonuclease H from Alcanivorax borkumensis (strain ATCC 700651 / DSM 11573 / NCIMB 13689 / SK2).